The sequence spans 60 residues: UPF0434 protein NMA0874 (60 aa).

It belongs to the UPF0434 family.

This Neisseria meningitidis serogroup A / serotype 4A (strain DSM 15465 / Z2491) protein is UPF0434 protein NMA0874.